The chain runs to 671 residues: Pescadillo homolog (671 aa).

Coiled coils occupy residues 294–323 (NQAQAKAVKEAESKRSLMEEELHKVRELFR) and 548–584 (QALRKAQEKSRQTETSEARLQRKMSEVKRQEAATRKM). A BRCT domain is found at 317-403 (KVRELFRGLT…LVLPVTGYRI (87 aa)). Disordered regions lie at residues 552–577 (KAQEKSRQTETSEARLQRKMSEVKRQ) and 634–671 (GLVNKRLEARRQRAEAKGKKLKERKAGNPYKKLPKWVQ). Residues 634 to 651 (GLVNKRLEARRQRAEAKG) show a composition bias toward basic and acidic residues.

Belongs to the pescadillo family.

The protein localises to the nucleus. It localises to the nucleolus. Its subcellular location is the nucleoplasm. Required for maturation of ribosomal RNAs and formation of the large ribosomal subunit. The polypeptide is Pescadillo homolog (Leishmania major).